The following is a 125-amino-acid chain: Probable endoribonuclease HigB1 (125 aa).

The protein belongs to the mycobacterial HigB family.

Its function is as follows. Toxic component of an atypical, type II toxin-antitoxin chaperone (TAC) system. Probably an endoribonuclease, neutralized by its cognate antitoxin HigA which also requires SecB-like chaperone MT2006 (AC Q7D7P7). This is Probable endoribonuclease HigB1 from Mycobacterium tuberculosis (strain CDC 1551 / Oshkosh).